We begin with the raw amino-acid sequence, 67 residues long: Brevinin-1CDYc (67 aa).

The N-terminal stretch at 1-22 (MFTLKKSLLLIFFLGTINLSLC) is a signal peptide. A propeptide spanning residues 23-45 (EEERNADEEERRDDPEERDVEVE) is cleaved from the precursor. A disulfide bridge links Cys61 with Cys67.

Belongs to the frog skin active peptide (FSAP) family. Brevinin subfamily. As to expression, expressed by the skin glands.

Its subcellular location is the secreted. Its function is as follows. Antimicrobial peptide. This chain is Brevinin-1CDYc, found in Rana huanrensis (Huanren frog).